Reading from the N-terminus, the 363-residue chain is 3-isopropylmalate dehydrogenase (363 aa).

78-91 (GPKWEHLPPDQQPE) contributes to the NAD(+) binding site. Residues arginine 99, arginine 109, arginine 138, and aspartate 227 each coordinate substrate. Residues aspartate 227, aspartate 251, and aspartate 255 each coordinate Mg(2+). 285 to 297 (GSAPDIAGKNIAN) serves as a coordination point for NAD(+).

It belongs to the isocitrate and isopropylmalate dehydrogenases family. LeuB type 1 subfamily. Homodimer. Mg(2+) serves as cofactor. Mn(2+) is required as a cofactor.

The protein resides in the cytoplasm. The catalysed reaction is (2R,3S)-3-isopropylmalate + NAD(+) = 4-methyl-2-oxopentanoate + CO2 + NADH. The protein operates within amino-acid biosynthesis; L-leucine biosynthesis; L-leucine from 3-methyl-2-oxobutanoate: step 3/4. In terms of biological role, catalyzes the oxidation of 3-carboxy-2-hydroxy-4-methylpentanoate (3-isopropylmalate) to 3-carboxy-4-methyl-2-oxopentanoate. The product decarboxylates to 4-methyl-2 oxopentanoate. The protein is 3-isopropylmalate dehydrogenase of Shigella sonnei (strain Ss046).